The chain runs to 156 residues: Putative pre-16S rRNA nuclease (156 aa).

This sequence belongs to the YqgF nuclease family.

It localises to the cytoplasm. Functionally, could be a nuclease involved in processing of the 5'-end of pre-16S rRNA. The chain is Putative pre-16S rRNA nuclease from Ehrlichia ruminantium (strain Gardel).